Here is a 433-residue protein sequence, read N- to C-terminus: Glutamyl-tRNA reductase (433 aa).

Residues 49–52, S109, 114–116, and Q120 contribute to the substrate site; these read TCNR and EGQ. Residue C50 is the Nucleophile of the active site. 189-194 is a binding site for NADP(+); that stretch reads GAGKMS.

It belongs to the glutamyl-tRNA reductase family. In terms of assembly, homodimer.

The catalysed reaction is (S)-4-amino-5-oxopentanoate + tRNA(Glu) + NADP(+) = L-glutamyl-tRNA(Glu) + NADPH + H(+). Its pathway is porphyrin-containing compound metabolism; protoporphyrin-IX biosynthesis; 5-aminolevulinate from L-glutamyl-tRNA(Glu): step 1/2. It functions in the pathway porphyrin-containing compound metabolism; chlorophyll biosynthesis. Catalyzes the NADPH-dependent reduction of glutamyl-tRNA(Glu) to glutamate 1-semialdehyde (GSA). This chain is Glutamyl-tRNA reductase, found in Acaryochloris marina (strain MBIC 11017).